The sequence spans 721 residues: MSYNLPNPSLIGILLIISTHSGPQLIYKQPPGLTKEPDEDEGEYDQEDIAETESDEYGNYFEYDEDSNMYGTNLYKQWDANHLNYYMGTKKDLISFLDEIETKRKQASMKAVAKKRSQLSKIASNPSTISTTGNSGNDSIFGIEPAYLCEMLAPPKKMCNSRFEIMIDDKIFLGLPVHKYDNGSWRLKGSSKRINRNKEENTHQHEVDNSKSKLNLNMFHLVFIMNPPVIEYNYRIDEMFHYVISRLSLVLRYEQSKNDFISNQVKMILNLKEQFKEKEELESQLLNKSSLCKMIHDCYLSISQSKIANLSVNNKLRSFQIPIKTEFHSLPESSVPFIPGSHLSSTVGLLGTTGLINVGETTRYGEAMNDENEGISEAADDIVYFALLLLDDAESIIRDIKTESSGTLAKFIRMINPTESLLKLSTRSNSLDTLQVKSFAFHLIYWRRARVIQPLSTRSVYFVSPMAPITTNLYTDIREFKKSFPTLPSLPQFLKLLSPQSKKPSQFATVIPSKDHRDIYFEALSWLIRFGYVTQLQTFIWLKISRKIKIKVEEDLENESSSRKRSNITKKLLMGGTDNSSKDPAAESSTDNRIMDQNDDKEENATKQLSNINAEDQEIENIKERLKSTSLGPLVSLEDDDDTILLDPGRATTLERRWINKIIFDECKLSSELTNAFYKLLKYMDGKSPLELLLLKENISRTEIRKLLIAIEDHIISVRHW.

The N-terminal stretch at 1 to 21 is a signal peptide; sequence MSYNLPNPSLIGILLIISTHS. Disordered regions lie at residues 27-54 and 555-614; these read YKQP…ETES and DLEN…NINA. Residues 37-54 show a composition bias toward acidic residues; it reads PDEDEGEYDQEDIAETES.

Belongs to the NPR3 family.

In terms of biological role, mediates inactivation of the TORC1 complex in response to amino acid starvation. Required for meiotic nuclear division. The chain is Nitrogen permease regulator 3 (NPR3) from Scheffersomyces stipitis (strain ATCC 58785 / CBS 6054 / NBRC 10063 / NRRL Y-11545) (Yeast).